The primary structure comprises 706 residues: Choline transporter-like protein 2 (706 aa).

Residues 1-32 lie on the Cytoplasmic side of the membrane; that stretch reads MMELEGEKPNYGEPRKYDPTFKGPIYNRGCTD. Residues 33–53 traverse the membrane as a helical segment; that stretch reads IVCCIFFIICILGYVAVGILA. Residues 54-232 are Extracellular-facing; that stretch reads WSQGDPRKVI…KIFEDYTQSW (179 aa). N-linked (GlcNAc...) asparagine glycans are attached at residues N187 and N210. The chain crosses the membrane as a helical span at residues 233–253; the sequence is YWILIGLVIAMLISLLFIVLL. At 254–256 the chain is on the cytoplasmic side; it reads RFL. The chain crosses the membrane as a helical span at residues 257-277; the sequence is AGIMVWVMIVMVILVIGYGIF. The Extracellular segment spans residues 278 to 315; it reads HCSMEYVSLKSEAGSNVTLKDLGFQTDFSVYLHIRQTW. The N-linked (GlcNAc...) asparagine glycan is linked to N293. Residues 316–336 traverse the membrane as a helical segment; the sequence is LAFIIILAIVEVVIILLLIFL. The Cytoplasmic segment spans residues 337–364; it reads RNRILIAIALIKEASRAIGYVMSALFYP. The chain crosses the membrane as a helical span at residues 365 to 385; sequence LFTFALLSIVIAYWAVTAVFL. Residues 386 to 454 lie on the Extracellular side of the membrane; sequence STSNQPIYKV…LQFYNVFLFF (69 aa). N-linked (GlcNAc...) asparagine glycosylation is found at N397 and N412. The helical transmembrane segment at 455–477 threads the bilayer; it reads WCANFVTALGQMTLAGAFASYYW. Over 478–504 the chain is Cytoplasmic; that stretch reads ALVKPDDMPAFPIFSSLGRSLRYHTGS. A helical membrane pass occupies residues 505–525; the sequence is LAFGSLILSIIQIIRVLLEYI. Residues 526 to 599 are Extracellular-facing; it reads DHKLQGTQNK…RVAVLDKVTD (74 aa). Residues 600–620 traverse the membrane as a helical segment; the sequence is FLLFLGKLLIVGLVGIFAFFF. Residues 621-638 lie on the Cytoplasmic side of the membrane; it reads FSGRVKAFENTAPNLHYY. Residues 639-659 traverse the membrane as a helical segment; that stretch reads WVPILTVVVGSYLIAHGFFSV. The Extracellular portion of the chain corresponds to 660–706; that stretch reads YAMCVDTLFLCFLEDLERNDGSAERPYLMSDRLLKVLNKKNKPEPAE.

Belongs to the CTL (choline transporter-like) family.

It is found in the cell membrane. The protein localises to the mitochondrion outer membrane. The enzyme catalyses choline(out) + n H(+)(in) = choline(in) + n H(+)(out). It catalyses the reaction ethanolamine(out) + n H(+)(in) = ethanolamine(in) + n H(+)(out). In terms of biological role, choline/H+ antiporter, mainly in mitochodria. Also acts as a low-affinity ethanolamine/H+ antiporter, regulating the supply of extracellular ethanolamine (Etn) for the CDP-Etn pathway, redistribute intracellular Etn and balance the CDP-Cho and CDP-Etn arms of the Kennedy pathway. This Salmo salar (Atlantic salmon) protein is Choline transporter-like protein 2 (slc44a2).